Reading from the N-terminus, the 263-residue chain is Proteasome subunit alpha type-1 (263 aa).

Met1 is subject to N-acetylmethionine. Ser110 is modified (phosphoserine; alternate). O-linked (GlcNAc) serine; alternate glycosylation is present at Ser110. A Glycyl lysine isopeptide (Lys-Gly) (interchain with G-Cter in ubiquitin) cross-link involves residue Lys115. The residue at position 177 (Ser177) is a Phosphoserine. Lys208 participates in a covalent cross-link: Glycyl lysine isopeptide (Lys-Gly) (interchain with G-Cter in ubiquitin). Positions 232–263 (FLDGLEERPQRKAQPSQAADEPAEKADEPMEH) are disordered. The segment covering 253–263 (PAEKADEPMEH) has biased composition (basic and acidic residues).

The protein belongs to the peptidase T1A family. As to quaternary structure, the 26S proteasome consists of a 20S proteasome core and two 19S regulatory subunits. The 20S proteasome core is a barrel-shaped complex made of 28 subunits that are arranged in four stacked rings. The two outer rings are each formed by seven alpha subunits, and the two inner rings are formed by seven beta subunits. The proteolytic activity is exerted by three beta-subunits PSMB5, PSMB6 and PSMB7. Interacts with NOTCH3. Interacts with ZFAND1. In terms of processing, proteolytically cleaved from a C-terminal extension in the course of the conversion of the proteasome from its latent form into its active form. Ubiquitous.

It is found in the cytoplasm. Its subcellular location is the nucleus. In terms of biological role, component of the 20S core proteasome complex involved in the proteolytic degradation of most intracellular proteins. This complex plays numerous essential roles within the cell by associating with different regulatory particles. Associated with two 19S regulatory particles, forms the 26S proteasome and thus participates in the ATP-dependent degradation of ubiquitinated proteins. The 26S proteasome plays a key role in the maintenance of protein homeostasis by removing misfolded or damaged proteins that could impair cellular functions, and by removing proteins whose functions are no longer required. Associated with the PA200 or PA28, the 20S proteasome mediates ubiquitin-independent protein degradation. This type of proteolysis is required in several pathways including spermatogenesis (20S-PA200 complex) or generation of a subset of MHC class I-presented antigenic peptides (20S-PA28 complex). This Rattus norvegicus (Rat) protein is Proteasome subunit alpha type-1 (Psma1).